A 638-amino-acid polypeptide reads, in one-letter code: Threonine--tRNA ligase (638 aa).

The region spanning 1–62 (MYQLTLPDKS…EKNSNIEVLT (62 aa)) is the TGS domain. The tract at residues 246–537 (DHRKIGKEMD…LIEHYEGKFP (292 aa)) is catalytic. C337, H388, and H514 together coordinate Zn(2+).

This sequence belongs to the class-II aminoacyl-tRNA synthetase family. As to quaternary structure, homodimer. The cofactor is Zn(2+).

Its subcellular location is the cytoplasm. It catalyses the reaction tRNA(Thr) + L-threonine + ATP = L-threonyl-tRNA(Thr) + AMP + diphosphate + H(+). Functionally, catalyzes the attachment of threonine to tRNA(Thr) in a two-step reaction: L-threonine is first activated by ATP to form Thr-AMP and then transferred to the acceptor end of tRNA(Thr). Also edits incorrectly charged L-seryl-tRNA(Thr). The sequence is that of Threonine--tRNA ligase from Leptospira interrogans serogroup Icterohaemorrhagiae serovar copenhageni (strain Fiocruz L1-130).